A 487-amino-acid polypeptide reads, in one-letter code: Serine carboxypeptidase-like 38 (487 aa).

A signal peptide spans 1–20 (MGKQQDWSVTACIFLSLSLA). 3 disulfide bridges follow: cysteine 119–cysteine 368, cysteine 280–cysteine 290, and cysteine 315–cysteine 336. The active site involves serine 215. Asparagine 233 carries an N-linked (GlcNAc...) asparagine glycan. N-linked (GlcNAc...) asparagine glycosylation is found at asparagine 317 and asparagine 357. Aspartate 407 is an active-site residue. N-linked (GlcNAc...) asparagine glycosylation is found at asparagine 423 and asparagine 449. Histidine 460 is a catalytic residue.

The protein belongs to the peptidase S10 family. In terms of tissue distribution, expressed in seedlings, roots, leaves, flowers and siliques.

It is found in the secreted. Functionally, probable carboxypeptidase. The chain is Serine carboxypeptidase-like 38 (SCPL38) from Arabidopsis thaliana (Mouse-ear cress).